The following is a 467-amino-acid chain: 6-phospho-beta-galactosidase (467 aa).

5 residues coordinate D-galactose 6-phosphate: Gln-19, His-116, Asn-159, Glu-160, and Asn-297. Glu-160 (proton donor) is an active-site residue. Glu-375 functions as the Nucleophile in the catalytic mechanism. The D-galactose 6-phosphate site is built by Ser-428, Trp-429, Lys-435, and Tyr-437.

The protein belongs to the glycosyl hydrolase 1 family.

It carries out the reaction a 6-phospho-beta-D-galactoside + H2O = D-galactose 6-phosphate + an alcohol. It participates in carbohydrate metabolism; lactose degradation; D-galactose 6-phosphate and beta-D-glucose from lactose 6-phosphate: step 1/1. Inhibited by both galactose-6-phosphate and ATP. In Leptotrichia buccalis (strain ATCC 14201 / DSM 1135 / JCM 12969 / NCTC 10249 / C-1013-b), this protein is 6-phospho-beta-galactosidase.